Reading from the N-terminus, the 206-residue chain is Probable chemoreceptor glutamine deamidase CheD (206 aa).

The protein belongs to the CheD family.

The enzyme catalyses L-glutaminyl-[protein] + H2O = L-glutamyl-[protein] + NH4(+). Its function is as follows. Probably deamidates glutamine residues to glutamate on methyl-accepting chemotaxis receptors (MCPs), playing an important role in chemotaxis. In Laribacter hongkongensis (strain HLHK9), this protein is Probable chemoreceptor glutamine deamidase CheD.